We begin with the raw amino-acid sequence, 773 residues long: ATP-dependent permease MDL2, mitochondrial (773 aa).

The transit peptide at M1–S90 directs the protein to the mitochondrion. Over residues P73–S84 the composition is skewed to polar residues. A disordered region spans residues P73–E95. The region spanning L119–Q413 is the ABC transmembrane type-1 domain. The next 3 membrane-spanning stretches (helical) occupy residues I123–V143, F170–L192, and V257–F277. ATP is bound at residue G481–S488. Positions L493–D733 constitute an ABC transporter domain. Composition is skewed to basic and acidic residues over residues K706–D733 and E740–K762. Positions K706–P773 are disordered.

It belongs to the ABC transporter superfamily. ABCB family. Mitochondrial peptide exporter (TC 3.A.1.212) subfamily.

It localises to the mitochondrion inner membrane. The polypeptide is ATP-dependent permease MDL2, mitochondrial (MDL2) (Saccharomyces cerevisiae (strain ATCC 204508 / S288c) (Baker's yeast)).